The primary structure comprises 837 residues: Tuftelin-interacting protein 11 (837 aa).

2 stretches are compositionally biased toward basic and acidic residues: residues 1-13 and 53-64; these read MSLSHLYRDGEGR and VWAERDSDDERP. 3 disordered regions span residues 1 to 21, 53 to 72, and 85 to 133; these read MSLSHLYRDGEGRIDDDDDER, VWAERDSDDERPSFGGKRAR, and LKKG…KGFA. Residues 1–50 are required for interaction with DHX15; that stretch reads MSLSHLYRDGEGRIDDDDDERENFEITDWDLQNEFNPNRQRHWQTKEEAT. Phosphoserine occurs at positions 2, 59, and 98. A compositionally biased stretch (acidic residues) spans 91–102; sequence EEAELEDSDDEE. Over residues 103 to 116 the composition is skewed to basic and acidic residues; the sequence is KPVKQDDFPKDFGP. Position 144 is a phosphoserine (S144). A G-patch domain is found at 149–195; sequence TKGIGQKLLQKMGYVPGRGLGKNAQGIINPIEAKQRKGKGAVGAYGS. The interval 179–236 is disordered; sequence IEAKQRKGKGAVGAYGSERTTQSMQDFPVVDSEEEAEEEFQKELSQWRKDPSGSKKKP. S210 carries the phosphoserine modification. Residues 217–231 show a composition bias toward basic and acidic residues; that stretch reads EFQKELSQWRKDPSG. The short motif at 700-705 is the Nuclear localization signal element; that stretch reads VKDKFN. The interval 710–734 is required for nuclear speckle localization; that stretch reads IMNRAVSSNVGAYMQPGARENIAYL.

This sequence belongs to the TFP11/STIP family. In terms of assembly, identified in the spliceosome C complex. Found in the Intron Large (IL) complex, a post-mRNA release spliceosomal complex containing the excised intron, U2, U5 and U6 snRNPs, and splicing factors. Interacts with TUFT1. Interacts with DHX15; indicative for a recruitment of DHX15 to the IL complex. Interacts with GCFC2.

It is found in the cytoplasm. It localises to the nucleus. In terms of biological role, involved in pre-mRNA splicing, specifically in spliceosome disassembly during late-stage splicing events. Intron turnover seems to proceed through reactions in two lariat-intron associated complexes termed Intron Large (IL) and Intron Small (IS). In cooperation with DHX15 seems to mediate the transition of the U2, U5 and U6 snRNP-containing IL complex to the snRNP-free IS complex leading to efficient debranching and turnover of excised introns. May play a role in the differentiation of ameloblasts and odontoblasts or in the forming of the enamel extracellular matrix. The chain is Tuftelin-interacting protein 11 (TFIP11) from Pan troglodytes (Chimpanzee).